Here is a 42-residue protein sequence, read N- to C-terminus: Crotamine-IV-2 (42 aa).

Disulfide bonds link Cys-4/Cys-37, Cys-11/Cys-31, and Cys-19/Cys-38.

It belongs to the crotamine-myotoxin family. As to quaternary structure, monomer. Expressed by the venom gland.

Its subcellular location is the secreted. Cationic peptide that possesses multiple functions. It acts as a cell-penetrating peptide (CPP), and as a potent voltage-gated potassium channel (Kv) inhibitor. It exhibits antimicrobial activities, and hind limb paralysis. It also induces potent blockade of neuromuscular transmission in young chicken biventer cervicis preparation and potent myotoxic effect. In vivo, induces myonecrosis, upon intramuscular or subcutaneous injections into mice. This chain is Crotamine-IV-2, found in Crotalus durissus cumanensis (South American rattlesnake).